Consider the following 165-residue polypeptide: Nucleotide-binding protein MXAN_1478 (165 aa).

This sequence belongs to the YajQ family.

Nucleotide-binding protein. In Myxococcus xanthus (strain DK1622), this protein is Nucleotide-binding protein MXAN_1478.